The sequence spans 144 residues: 3-hydroxyacyl-[acyl-carrier-protein] dehydratase FabZ (144 aa).

The active site involves histidine 48.

It belongs to the thioester dehydratase family. FabZ subfamily.

The protein localises to the cytoplasm. The catalysed reaction is a (3R)-hydroxyacyl-[ACP] = a (2E)-enoyl-[ACP] + H2O. Its function is as follows. Involved in unsaturated fatty acids biosynthesis. Catalyzes the dehydration of short chain beta-hydroxyacyl-ACPs and long chain saturated and unsaturated beta-hydroxyacyl-ACPs. In Bacillus cereus (strain AH187), this protein is 3-hydroxyacyl-[acyl-carrier-protein] dehydratase FabZ.